Here is a 163-residue protein sequence, read N- to C-terminus: 3-hydroxyacyl-[acyl-carrier-protein] dehydratase FabZ (163 aa).

The active site involves His-61.

This sequence belongs to the thioester dehydratase family. FabZ subfamily.

Its subcellular location is the cytoplasm. The enzyme catalyses a (3R)-hydroxyacyl-[ACP] = a (2E)-enoyl-[ACP] + H2O. Its function is as follows. Involved in unsaturated fatty acids biosynthesis. Catalyzes the dehydration of short chain beta-hydroxyacyl-ACPs and long chain saturated and unsaturated beta-hydroxyacyl-ACPs. This chain is 3-hydroxyacyl-[acyl-carrier-protein] dehydratase FabZ, found in Dinoroseobacter shibae (strain DSM 16493 / NCIMB 14021 / DFL 12).